The sequence spans 444 residues: Maturase K (444 aa).

Belongs to the intron maturase 2 family. MatK subfamily.

It localises to the plastid. Its subcellular location is the chloroplast. Functionally, usually encoded in the trnK tRNA gene intron. Probably assists in splicing its own and other chloroplast group II introns. The sequence is that of Maturase K from Chamaecyparis lawsoniana (Lawson false cypress).